Here is a 360-residue protein sequence, read N- to C-terminus: Photosystem II protein D1 2 (360 aa).

Helical transmembrane passes span 29–46, 118–133, and 142–156; these read YIGW…AATT, HFLT…EWEL, and WICL…AATA. Histidine 118 is a binding site for chlorophyll a. Tyrosine 126 is a binding site for pheophytin a. The [CaMn4O5] cluster site is built by aspartate 170 and glutamate 189. The helical transmembrane segment at 197 to 218 threads the bilayer; it reads FHMLGVAGVFGGSLFSAMHGSL. Histidine 198 is a binding site for chlorophyll a. A quinone is bound by residues histidine 215 and 264–265; that span reads SF. Histidine 215 contacts Fe cation. A Fe cation-binding site is contributed by histidine 272. The helical transmembrane segment at 274 to 288 threads the bilayer; sequence FLAAWPVIGIWFTAL. Residues histidine 332, glutamate 333, aspartate 342, and alanine 344 each coordinate [CaMn4O5] cluster. Residues 345–360 constitute a propeptide that is removed on maturation; it reads AGEVAPVALTAPAING.

Belongs to the reaction center PufL/M/PsbA/D family. PSII is composed of 1 copy each of membrane proteins PsbA, PsbB, PsbC, PsbD, PsbE, PsbF, PsbH, PsbI, PsbJ, PsbK, PsbL, PsbM, PsbT, PsbX, PsbY, PsbZ, Psb30/Ycf12, peripheral proteins PsbO, CyanoQ (PsbQ), PsbU, PsbV and a large number of cofactors. It forms dimeric complexes. It depends on The D1/D2 heterodimer binds P680, chlorophylls that are the primary electron donor of PSII, and subsequent electron acceptors. It shares a non-heme iron and each subunit binds pheophytin, quinone, additional chlorophylls, carotenoids and lipids. D1 provides most of the ligands for the Mn4-Ca-O5 cluster of the oxygen-evolving complex (OEC). There is also a Cl(-1) ion associated with D1 and D2, which is required for oxygen evolution. The PSII complex binds additional chlorophylls, carotenoids and specific lipids. as a cofactor. Post-translationally, tyr-161 forms a radical intermediate that is referred to as redox-active TyrZ, YZ or Y-Z. In terms of processing, C-terminally processed by CtpA; processing is essential to allow assembly of the oxygen-evolving complex and thus photosynthetic growth.

It is found in the cellular thylakoid membrane. The enzyme catalyses 2 a plastoquinone + 4 hnu + 2 H2O = 2 a plastoquinol + O2. Its function is as follows. Photosystem II (PSII) is a light-driven water:plastoquinone oxidoreductase that uses light energy to abstract electrons from H(2)O, generating O(2) and a proton gradient subsequently used for ATP formation. It consists of a core antenna complex that captures photons, and an electron transfer chain that converts photonic excitation into a charge separation. The D1/D2 (PsbA/PsbD) reaction center heterodimer binds P680, the primary electron donor of PSII as well as several subsequent electron acceptors. This Trichormus variabilis (strain ATCC 29413 / PCC 7937) (Anabaena variabilis) protein is Photosystem II protein D1 2.